A 35-amino-acid chain; its full sequence is Beta-amanitin proprotein (35 aa).

The propeptide occupies 1–10; that stretch reads MSDINATRLP. Positions 11–18 form a cross-link, cyclopeptide (Ile-Pro); sequence IWGIGCDP. Positions 12-16 form a cross-link, 2'-cysteinyl-6'-hydroxytryptophan sulfoxide (Trp-Cys); that stretch reads WGIGC. Positions 19-35 are excised as a propeptide; that stretch reads CVGDDVTALLTRGEALC.

Belongs to the MSDIN fungal toxin family. In terms of processing, processed by the macrocyclase-peptidase enzyme POPB to yield a toxic cyclic octapeptide. POPB first removes 10 residues from the N-terminus. Conformational trapping of the remaining peptide forces the enzyme to release this intermediate rather than proceed to macrocyclization. The enzyme rebinds the remaining peptide in a different conformation and catalyzes macrocyclization of the N-terminal 8 residues. In terms of tissue distribution, expressed in basidiocarps.

Functionally, toxin belonging to the bicyclic octapeptides amatoxins that acts by binding non-competitively to RNA polymerase II and greatly slowing the elongation of transcripts from target promoters. This Amanita exitialis (Guangzhou destroying angel) protein is Beta-amanitin proprotein.